We begin with the raw amino-acid sequence, 965 residues long: Phosphatidylethanolamine N-methyltransferase (965 aa).

Residues 1-55 (MSSSAADPFAARLNSDVRQRHPTASATSKNVEGTSQQKQQQQQQQSEANAAASRV) form a disordered region. Residues 1–91 (MSSSAADPFA…DPREPKNLSD (91 aa)) are Lumenal-facing. A compositionally biased stretch (polar residues) spans 22–35 (PTASATSKNVEGTS). Over residues 36–45 (QQKQQQQQQQ) the composition is skewed to low complexity. Residues 92 to 112 (VAVLAIIALHFLAAYYLPWGV) form a helical membrane-spanning segment. Over 113-115 (KRP) the chain is Cytoplasmic. The chain crosses the membrane as a helical span at residues 116 to 136 (LFAAIFMFWRLAYNVGIGYLL). Residues 137–201 (TIQSKYKLLV…EYNTWLTFRR (65 aa)) are Lumenal-facing. The chain crosses the membrane as a helical span at residues 202-222 (VVDLILMCDFISYCLFAIVCA). Residues 223–229 (HKPDGEG) are Cytoplasmic-facing. The chain crosses the membrane as a helical span at residues 230-250 (LFMCFARWAAGITLVGFNLWV). Residues 251-279 (KLDAHRVVKDYAWYWGDFFYLIEQELTFD) lie on the Lumenal side of the membrane. The chain crosses the membrane as a helical span at residues 280–300 (GVFELAPHPMYSIGYAGYYGI). Over 301–306 (SMMAAS) the chain is Cytoplasmic. A helical membrane pass occupies residues 307–327 (YDVLFISIIAHAAQFAFLVIV). Residues 328–389 (ENPHIEKTYN…IGLKNLDFFR (62 aa)) are Lumenal-facing. Residues 390–410 (ITDVAIVLLCAYLAVVTMVTP) traverse the membrane as a helical segment. Over 411-417 (NTRFYQA) the chain is Cytoplasmic. A helical transmembrane segment spans residues 418-438 (LFVLHALAWRLWYSAGLGVIL). At 439–467 (TMQSEEKMFTRHFLKYGESVGEAWRQWKG) the chain is on the lumenal side. Residues 468–488 (IYHLSNCLCHASFIAASYKMY) form a helical membrane-spanning segment. Topologically, residues 489–496 (EFPADWTY) are cytoplasmic. A helical membrane pass occupies residues 497–517 (GWALLKHVVGLSLIALQVWTA). The Lumenal segment spans residues 518 to 573 (TSIYESLGEFGWFYGDFFFDSKRQLTYTSIYRFLNNPERVFGTAGLWGAALITWSR). The helical transmembrane segment at 574–594 (AIFLMALAGHFLTLAFLAYVE) threads the bilayer. The Cytoplasmic portion of the chain corresponds to 595 to 965 (KPHMQKVYGR…TTPVDSKFSE (371 aa)).

The protein belongs to the class VI-like SAM-binding methyltransferase superfamily. CHO2 family.

The protein localises to the endoplasmic reticulum membrane. It catalyses the reaction a 1,2-diacyl-sn-glycero-3-phosphoethanolamine + S-adenosyl-L-methionine = a 1,2-diacyl-sn-glycero-3-phospho-N-methylethanolamine + S-adenosyl-L-homocysteine + H(+). It functions in the pathway phospholipid metabolism; phosphatidylcholine biosynthesis. In terms of biological role, catalyzes the first step of the methylation pathway of phosphatidylcholine biosynthesis, the SAM-dependent methylation of phosphatidylethanolamine (PE) to phosphatidylmonomethylethanolamine (PMME). This is Phosphatidylethanolamine N-methyltransferase from Neurospora crassa (strain ATCC 24698 / 74-OR23-1A / CBS 708.71 / DSM 1257 / FGSC 987).